The chain runs to 640 residues: Insulin-like growth factor 1 receptor (640 aa).

Fibronectin type-III domains follow at residues V5–A101 and I107–K200. At E14–H208 the chain is on the extracellular side. N-linked (GlcNAc...) asparagine glycosylation is found at N20, N29, N37, N173, and N186. A helical membrane pass occupies residues L209–H232. At R233–C640 the chain is on the cytoplasmic side. Residues N250 to Y253 carry the IRS1- and SHC1-binding motif. A Phosphotyrosine modification is found at Y253. The Protein kinase domain occupies I272–F547. Residues L278–V286 and K306 contribute to the ATP site. D408 acts as the Proton acceptor in catalysis. Residues Y434, Y438, and Y439 each carry the phosphotyrosine; by autocatalysis modification. Residues K441 and K444 each participate in a glycyl lysine isopeptide (Lys-Gly) (interchain with G-Cter in ubiquitin) cross-link. A Phosphoserine; by GSK3-beta modification is found at S551. S555 bears the Phosphoserine mark. The disordered stretch occupies residues S555–C640. The segment covering P563–N572 has biased composition (acidic residues). Residues M573 to L589 show a composition bias toward low complexity. The span at P590–E599 shows a compositional bias: basic and acidic residues.

The protein belongs to the protein kinase superfamily. Tyr protein kinase family. Insulin receptor subfamily. Tetramer of 2 alpha and 2 beta chains linked by disulfide bonds. The alpha chains contribute to the formation of the ligand-binding domain, while the beta chain carries the kinase domain. Interacts with PIK3R1 and with the PTB/PID domains of IRS1 and SHC1 in vitro when autophosphorylated on tyrosine residues. Forms a hybrid receptor with INSR, the hybrid is a tetramer consisting of 1 alpha chain and 1 beta chain of INSR and 1 alpha chain and 1 beta chain of IGF1R. Interacts with ARRB1 and ARRB2. Interacts with GRB10. Interacts with RACK1. Interacts with SOCS1, SOCS2 and SOCS3. Interacts with 14-3-3 proteins. Interacts with NMD2. Interacts with MAP3K5. Interacts with STAT3. Interacts (nascent precursor form) with ZFAND2B. Autophosphorylated on tyrosine residues in response to ligand binding. Autophosphorylation occurs in trans, i.e. one subunit of the dimeric receptor phosphorylates tyrosine residues on the other subunit. Autophosphorylation occurs in a sequential manner; Tyr-438 is predominantly phosphorylated first, followed by phosphorylation of Tyr-434 and Tyr-439. While every single phosphorylation increases kinase activity, all three tyrosine residues in the kinase activation loop (Tyr-438, Tyr-434 and Tyr-439) have to be phosphorylated for optimal activity. Can be autophosphorylated at additional tyrosine residues (in vitro). Autophosphorylated is followed by phosphorylation of juxtamembrane tyrosines and C-terminal serines. May also be phosphorylated at Tyr-434 and Tyr-439 by mTORC2. Phosphorylation of Tyr-253 is required for IRS1- and SHC1-binding. Phosphorylation of Ser-551 by GSK-3beta restrains kinase activity and promotes cell surface expression, it requires a priming phosphorylation at Ser-555. Dephosphorylated by PTPN1. In terms of processing, polyubiquitinated at Lys-441 and Lys-444 through both 'Lys-48' and 'Lys-29' linkages, promoting receptor endocytosis and subsequent degradation by the proteasome. Ubiquitination is facilitated by pre-existing phosphorylation. Post-translationally, sumoylated with SUMO1. Controlled by regulated intramembrane proteolysis (RIP). Undergoes metalloprotease-dependent constitutive ectodomain shedding to produce a membrane-anchored 52 kDa C-Terminal fragment which is further processed by presenilin gamma-secretase to yield an intracellular 50 kDa fragment.

The protein resides in the cell membrane. The enzyme catalyses L-tyrosyl-[protein] + ATP = O-phospho-L-tyrosyl-[protein] + ADP + H(+). With respect to regulation, activated by autophosphorylation at Tyr-434, Tyr-438 and Tyr-439 on the kinase activation loop; phosphorylation at all three tyrosine residues is required for optimal kinase activity. Inhibited by MSC1609119A-1, BMS-754807, PQIP, benzimidazole pyridinone, isoquinolinedione, bis-azaindole, 3-cyanoquinoline, 2,4-bis-arylamino-1,3-pyrimidine, pyrrolopyrimidine, pyrrole-5-carboxaldehyde, picropodophyllin (PPP), tyrphostin derivatives. While most inhibitors bind to the ATP binding pocket, MSC1609119A-1 functions as allosteric inhibitor and binds close to the DFG motif and the activation loop. Functionally, receptor tyrosine kinase which mediates actions of insulin-like growth factor 1 (IGF1). Binds IGF1 with high affinity and IGF2 and insulin (INS) with a lower affinity. The activated IGF1R is involved in cell growth and survival control. IGF1R is crucial for tumor transformation and survival of malignant cell. Ligand binding activates the receptor kinase, leading to receptor autophosphorylation, and tyrosines phosphorylation of multiple substrates, that function as signaling adapter proteins including, the insulin-receptor substrates (IRS1/2), Shc and 14-3-3 proteins. Phosphorylation of IRSs proteins lead to the activation of two main signaling pathways: the PI3K-AKT/PKB pathway and the Ras-MAPK pathway. The result of activating the MAPK pathway is increased cellular proliferation, whereas activating the PI3K pathway inhibits apoptosis and stimulates protein synthesis. Phosphorylated IRS1 can activate the 85 kDa regulatory subunit of PI3K (PIK3R1), leading to activation of several downstream substrates, including protein AKT/PKB. AKT phosphorylation, in turn, enhances protein synthesis through mTOR activation and triggers the antiapoptotic effects of IGFIR through phosphorylation and inactivation of BAD. In parallel to PI3K-driven signaling, recruitment of Grb2/SOS by phosphorylated IRS1 or Shc leads to recruitment of Ras and activation of the ras-MAPK pathway. In addition to these two main signaling pathways IGF1R signals also through the Janus kinase/signal transducer and activator of transcription pathway (JAK/STAT). Phosphorylation of JAK proteins can lead to phosphorylation/activation of signal transducers and activators of transcription (STAT) proteins. In particular activation of STAT3, may be essential for the transforming activity of IGF1R. The JAK/STAT pathway activates gene transcription and may be responsible for the transforming activity. JNK kinases can also be activated by the IGF1R. IGF1 exerts inhibiting activities on JNK activation via phosphorylation and inhibition of MAP3K5/ASK1, which is able to directly associate with the IGF1R. When present in a hybrid receptor with INSR, binds IGF1. The protein is Insulin-like growth factor 1 receptor (IGF1R) of Bos taurus (Bovine).